The primary structure comprises 146 residues: Large ribosomal subunit protein uL11 (146 aa).

This sequence belongs to the universal ribosomal protein uL11 family. Part of the ribosomal stalk of the 50S ribosomal subunit. Interacts with L10 and the large rRNA to form the base of the stalk. L10 forms an elongated spine to which L12 dimers bind in a sequential fashion forming a multimeric L10(L12)X complex. One or more lysine residues are methylated.

Functionally, forms part of the ribosomal stalk which helps the ribosome interact with GTP-bound translation factors. In Corynebacterium kroppenstedtii (strain DSM 44385 / JCM 11950 / CIP 105744 / CCUG 35717), this protein is Large ribosomal subunit protein uL11.